Here is a 232-residue protein sequence, read N- to C-terminus: Octanoyltransferase (232 aa).

The BPL/LPL catalytic domain maps to 44–219 (EYTADEIWVV…QLARQFGLVL (176 aa)). Substrate contacts are provided by residues 83 to 90 (RGGQVTYH), 150 to 152 (ALG), and 163 to 165 (GLS). Catalysis depends on cysteine 181, which acts as the Acyl-thioester intermediate.

This sequence belongs to the LipB family.

The protein localises to the cytoplasm. The catalysed reaction is octanoyl-[ACP] + L-lysyl-[protein] = N(6)-octanoyl-L-lysyl-[protein] + holo-[ACP] + H(+). The protein operates within protein modification; protein lipoylation via endogenous pathway; protein N(6)-(lipoyl)lysine from octanoyl-[acyl-carrier-protein]: step 1/2. Functionally, catalyzes the transfer of endogenously produced octanoic acid from octanoyl-acyl-carrier-protein onto the lipoyl domains of lipoate-dependent enzymes. Lipoyl-ACP can also act as a substrate although octanoyl-ACP is likely to be the physiological substrate. This Xanthomonas axonopodis pv. citri (strain 306) protein is Octanoyltransferase.